The chain runs to 131 residues: Large ribosomal subunit protein bL12 (131 aa).

The protein belongs to the bacterial ribosomal protein bL12 family. As to quaternary structure, homodimer. Part of the ribosomal stalk of the 50S ribosomal subunit. Forms a multimeric L10(L12)X complex, where L10 forms an elongated spine to which 2 to 4 L12 dimers bind in a sequential fashion. Binds GTP-bound translation factors.

Its function is as follows. Forms part of the ribosomal stalk which helps the ribosome interact with GTP-bound translation factors. Is thus essential for accurate translation. This is Large ribosomal subunit protein bL12 from Prochlorococcus marinus (strain MIT 9515).